Reading from the N-terminus, the 222-residue chain is PKHD-type hydroxylase Syncc9605_1577 (222 aa).

Residues 80 to 175 (KVHSLLVSRS…RYVCVGWIES (96 aa)) form the Fe2OG dioxygenase domain. Fe cation-binding residues include His98, Asp100, and His156. Residue Arg166 participates in 2-oxoglutarate binding.

The cofactor is Fe(2+). It depends on L-ascorbate as a cofactor.

The polypeptide is PKHD-type hydroxylase Syncc9605_1577 (Synechococcus sp. (strain CC9605)).